A 77-amino-acid polypeptide reads, in one-letter code: Dermatoxin-B1 (77 aa).

Residues 1-22 (MAFLKKSLFLVLFLGLVPLSLC) form the signal peptide. Residues 23–42 (ESEKREGENEEEQEDDQSEE) constitute a propeptide that is removed on maturation. Residues 24–45 (SEKREGENEEEQEDDQSEEKRS) form a disordered region. Residues 30 to 40 (ENEEEQEDDQS) show a composition bias toward acidic residues. Q76 bears the Glutamine amide mark.

This sequence belongs to the frog skin active peptide (FSAP) family. Dermatoxin subfamily. In terms of tissue distribution, highest expression in skin and to a lesser extent in brain and intestine.

The protein resides in the secreted. It localises to the target cell membrane. Functionally, possesses a potent antimicrobial activity against Gram-positive bacteria B.megaterium, C.glutamicum and S.aureus and mollicutes A.laidlawii and S.melliferum. Less active against Gram-negative bacteria B.cepacia, P.aeruginosa, S.typhimurium and S.meliloti. Probably acts by disturbing membrane functions with its amphipathic structure. In Phyllomedusa bicolor (Two-colored leaf frog), this protein is Dermatoxin-B1.